Reading from the N-terminus, the 415-residue chain is Serine hydroxymethyltransferase (415 aa).

Residues leucine 117 and 121–123 (GHL) each bind (6S)-5,6,7,8-tetrahydrofolate. Residue lysine 225 is modified to N6-(pyridoxal phosphate)lysine. A (6S)-5,6,7,8-tetrahydrofolate-binding site is contributed by 349-351 (SPF).

This sequence belongs to the SHMT family. As to quaternary structure, homodimer. The cofactor is pyridoxal 5'-phosphate.

It is found in the cytoplasm. The enzyme catalyses (6R)-5,10-methylene-5,6,7,8-tetrahydrofolate + glycine + H2O = (6S)-5,6,7,8-tetrahydrofolate + L-serine. The protein operates within one-carbon metabolism; tetrahydrofolate interconversion. It functions in the pathway amino-acid biosynthesis; glycine biosynthesis; glycine from L-serine: step 1/1. Its function is as follows. Catalyzes the reversible interconversion of serine and glycine with tetrahydrofolate (THF) serving as the one-carbon carrier. This reaction serves as the major source of one-carbon groups required for the biosynthesis of purines, thymidylate, methionine, and other important biomolecules. Also exhibits THF-independent aldolase activity toward beta-hydroxyamino acids, producing glycine and aldehydes, via a retro-aldol mechanism. The sequence is that of Serine hydroxymethyltransferase from Nitratiruptor sp. (strain SB155-2).